A 139-amino-acid chain; its full sequence is MDTPMLLVTNVNDAIQNDDLRMDSLTNENAWFLNNISYIFEDDEPIQQEDHSNYENLFIIDSDLNGKISGVELLSEKWQLLSYDQNKPYNCISLRVMDELRADLSPQDGDVKDLDSLARRYHDRNVQIRNLLDSLIQED.

It belongs to the ATG31 family. In terms of assembly, forms a stable complex with ATG17 and ATG29. Interacts directly with ATG29. The ATG17-ATG29-ATG31 complex interacts with the ATG1-ATG13 complex. Note=The interaction with the ATG1-ATG13 complex is induced by starvation.

It localises to the preautophagosomal structure. Plays a role in starvation-induced autophagy. Involved in mitophagy. Functions with ATG17 and ATG29 at the preautophagosomal structure (PAS) in order to form normal autophagosomes under starvation conditions. In Kluyveromyces marxianus (strain DMKU3-1042 / BCC 29191 / NBRC 104275) (Yeast), this protein is Autophagy-related protein 31.